Here is a 1408-residue protein sequence, read N- to C-terminus: DNA-directed RNA polymerase subunit beta'' (1408 aa).

This sequence belongs to the RNA polymerase beta' chain family. RpoC2 subfamily. As to quaternary structure, in plastids the minimal PEP RNA polymerase catalytic core is composed of four subunits: alpha, beta, beta', and beta''. When a (nuclear-encoded) sigma factor is associated with the core the holoenzyme is formed, which can initiate transcription.

Its subcellular location is the plastid. The protein localises to the chloroplast. It catalyses the reaction RNA(n) + a ribonucleoside 5'-triphosphate = RNA(n+1) + diphosphate. In terms of biological role, DNA-dependent RNA polymerase catalyzes the transcription of DNA into RNA using the four ribonucleoside triphosphates as substrates. The sequence is that of DNA-directed RNA polymerase subunit beta'' from Psilotum nudum (Whisk fern).